Consider the following 79-residue polypeptide: Raniseptin-3 (79 aa).

Residues methionine 1–cysteine 22 form the signal peptide. A propeptide spanning residues glutamate 23–glutamate 49 is cleaved from the precursor.

This sequence belongs to the frog skin active peptide (FSAP) family. Dermaseptin subfamily. In terms of tissue distribution, expressed by the skin glands.

The protein resides in the secreted. Has antibacterial activity. The polypeptide is Raniseptin-3 (Boana raniceps (Chaco tree frog)).